Reading from the N-terminus, the 1152-residue chain is ATP-dependent helicase/deoxyribonuclease subunit B (1152 aa).

The UvrD-like helicase ATP-binding domain occupies Met-1–Arg-338. ATP is bound at residue Gly-8–Ser-15. A UvrD-like helicase C-terminal domain is found at Pro-276–Gly-579. The [4Fe-4S] cluster site is built by Cys-785, Cys-1106, Cys-1109, and Cys-1115.

It belongs to the helicase family. AddB/RexB type 1 subfamily. In terms of assembly, heterodimer of AddA and AddB. Mg(2+) serves as cofactor. The cofactor is [4Fe-4S] cluster.

Its function is as follows. The heterodimer acts as both an ATP-dependent DNA helicase and an ATP-dependent, dual-direction single-stranded exonuclease. Recognizes the chi site generating a DNA molecule suitable for the initiation of homologous recombination. The AddB subunit has 5' -&gt; 3' nuclease activity but not helicase activity. The sequence is that of ATP-dependent helicase/deoxyribonuclease subunit B from Clostridium botulinum (strain Alaska E43 / Type E3).